The primary structure comprises 570 residues: MSMFCYQCQEAAGGRGCTVKGVCGKTEDIAKTQDLIIYVVKGIAIYSSQAREIGLNTSEADKFIVESLFSTITNANFDAKALNARVQEGLKVRQSLKDAIIKAGGSYNSKENKSWTSKFLSVLGIKNDKDEKEIHDAAVWAANNPEDFKKKAETVGVLATENEDIRSLRELLTYGLKGMAAYLEHANNLGYDEDSIHAFMEKALVATLDDTLSADELTALVLECGKYGVDVMALLDKANTSTYGNPEITKVNIGVRNNPGILISGHDLKDMEELLKQTEGTGVDVYTHSEMLPANYYPAFKKYKHFVGNYGNAWWKQNEEFEAFNGPILMTTNCIVTPKASYKDRMYTTGVTGFEGVKHINASKDGKKDFSEIIEHAKRCSSPKEIEKGEIIGGFAHNQVLALAPQVVDAVKTGAIKRFFVMAGCDGRMKSRNYYTDFAKALPKDTVILTAGCAKYKYNKLDLGDINGIPRVLDAGQCNDSYSLAVIALKLKEVFELEDINELPISYNIAWYEQKAVIVLLALLHLGVKNIHLGPTLPAFLSPNVAKILVENFGIGTISSVDEDIKMFMN.

4 residues coordinate [4Fe-4S] cluster: Cys-5, Cys-8, Cys-17, and Cys-23. His-266, Glu-290, Cys-334, Cys-425, Cys-453, Cys-478, Glu-513, and Lys-515 together coordinate hybrid [4Fe-2O-2S] cluster. Residue Cys-425 is modified to Cysteine persulfide.

It belongs to the HCP family. [4Fe-4S] cluster is required as a cofactor. Requires hybrid [4Fe-2O-2S] cluster as cofactor.

The protein localises to the cytoplasm. It catalyses the reaction A + NH4(+) + H2O = hydroxylamine + AH2 + H(+). Its function is as follows. Catalyzes the reduction of hydroxylamine to form NH(3) and H(2)O. In Clostridium botulinum (strain Langeland / NCTC 10281 / Type F), this protein is Hydroxylamine reductase.